Reading from the N-terminus, the 673-residue chain is MVWLMEALKTKENETTKEKKLTTKVEKSEKKEENVREEEIVCPICGSKEVVKDYERAEIVCAKCGCVIKEKLFDIGPEWRAFDHEQKIKRCRVGAPMTYSVDYNEPIIIKENGEIKVVKIGELIDKIIENSENIRREGILEIAKCKGIEVIAFNSNYKFKFMPVSEVSRHPVSEMFEIVVEGNKKVRVTRSHSVFTIRDNEVVPIRVDELKVGDILVLAKELPNIEEDIEIDKKFSKILGYIIAEGYYDDKKIVLSYDYNEKEFINETIDYFKSLNSDITIYSKDLNIQIEVKNKKIINLLKKLRVKNKRIPSIIFKSPYEIKKSFIDGIFNGKDAKVFVSKELAEDVIFLLLQIKENATINKKSINDIEVYEVRRITNIYTNRKLEKLINSDFIFLKIKEINKVEPTSGYAYDLTVPNAENFVAGFGGFVLHNTIHDKGLSTVIDWRNKDSYGKDLSANKRAQLYRLRKWQRRIRVSDAAERNLAFALSELDRITSKLGLPRHVRENAAIIYRGAVEKGLIRGRSIEGVVAAAIYAACRRCRVPRTLDEIAEASRVDRKEIGRTYRFLARELNIKLTPTNPIDYVPRFASELGLPGEVESKAIQILQQAAEKGLTSGRGPTGVAAAAIYIASVLLGCRRTQREVAEVAGVTEVTIRNRYKELTEHLDIDVTL.

Residues 38-69 (EEIVCPICGSKEVVKDYERAEIVCAKCGCVIK) form a TFIIB-type zinc finger. 4 residues coordinate Zn(2+): Cys42, Cys45, Cys61, and Cys64. In terms of domain architecture, DOD-type homing endonuclease spans 238–357 (ILGYIIAEGY…VIFLLLQIKE (120 aa)). A run of 2 repeats spans residues 490-573 (SELD…AREL) and 584-665 (DYVP…ELTE).

It belongs to the TFIIB family. Post-translationally, this protein undergoes a protein self splicing that involves a post-translational excision of the intervening region (intein) followed by peptide ligation.

Stabilizes TBP binding to an archaeal box-A promoter. Also responsible for recruiting RNA polymerase II to the pre-initiation complex (DNA-TBP-TFIIB). The protein is Transcription initiation factor IIB (tfb) of Methanocaldococcus jannaschii (strain ATCC 43067 / DSM 2661 / JAL-1 / JCM 10045 / NBRC 100440) (Methanococcus jannaschii).